A 382-amino-acid polypeptide reads, in one-letter code: Calcium/calmodulin-dependent protein kinase (382 aa).

The Protein kinase domain occupies 23-278 (YKFGRTLGAG…SKEALGHIWL (256 aa)). ATP contacts are provided by residues 29–37 (LGAGTYGVV) and lysine 50. Residue aspartate 142 is the Proton acceptor of the active site. Residues 291-301 (ELEAYRRRARL) are calmodulin-binding. Disordered regions lie at residues 318–344 (KEHE…GDGS) and 359–382 (QKQE…FSNA).

It belongs to the protein kinase superfamily. CAMK Ser/Thr protein kinase family. CaMK subfamily.

The catalysed reaction is L-seryl-[protein] + ATP = O-phospho-L-seryl-[protein] + ADP + H(+). It catalyses the reaction L-threonyl-[protein] + ATP = O-phospho-L-threonyl-[protein] + ADP + H(+). The polypeptide is Calcium/calmodulin-dependent protein kinase (Metarhizium anisopliae (Entomophthora anisopliae)).